Here is a 781-residue protein sequence, read N- to C-terminus: Aconitate hydratase, mitochondrial (781 aa).

The transit peptide at 1–27 directs the protein to the mitochondrion; the sequence is MAPYSLLVTRLQKALGVRQYHVASVLC. Position 28 is a pyrrolidone carboxylic acid (Q28). Residue K31 is modified to N6-succinyllysine. N6-acetyllysine; alternate is present on K50. K50 is modified (N6-succinyllysine; alternate). Q99 contributes to the substrate binding site. An N6-acetyllysine; alternate mark is found at K138 and K144. N6-succinyllysine; alternate occurs at positions 138 and 144. 192–194 is a substrate binding site; sequence DSH. K233 carries the N6-acetyllysine; alternate modification. The residue at position 233 (K233) is an N6-succinyllysine; alternate. A [4Fe-4S] cluster-binding site is contributed by C385. Position 411 is an N6-succinyllysine (K411). The [4Fe-4S] cluster site is built by C448 and C451. Residues R474 and R479 each coordinate substrate. Residues K517 and K523 each carry the N6-acetyllysine; alternate modification. N6-succinyllysine; alternate occurs at positions 517 and 523. Residues 524–537 are compositionally biased toward basic and acidic residues; it reads LEAPDADELPRAEF. Positions 524 to 561 are disordered; it reads LEAPDADELPRAEFDPGQDTYQHPPKDSSGQRVDVSPT. K549 carries the post-translational modification N6-succinyllysine. Positions 551 to 561 are enriched in polar residues; that stretch reads SSGQRVDVSPT. At S559 the chain carries Phosphoserine. An N6-acetyllysine; alternate modification is found at K573. Position 573 is an N6-succinyllysine; alternate (K573). An N6-succinyllysine mark is found at K577 and K591. An N6-acetyllysine; alternate modification is found at K605. Residue K605 is modified to N6-succinyllysine; alternate. R607 contributes to the substrate binding site. K628 carries the N6-succinyllysine modification. S670 carries the post-translational modification Phosphoserine. Residue 670 to 671 participates in substrate binding; that stretch reads SR. At K689 the chain carries N6-succinyllysine. 2 positions are modified to N6-acetyllysine; alternate: K723 and K730. N6-succinyllysine; alternate occurs at positions 723 and 730. 3 positions are modified to N6-acetyllysine: K736, K739, and K743.

This sequence belongs to the aconitase/IPM isomerase family. In terms of assembly, monomer. [4Fe-4S] cluster serves as cofactor. Forms covalent cross-links mediated by transglutaminase TGM2, between a glutamine and the epsilon-amino group of a lysine residue, forming homopolymers and heteropolymers.

The protein resides in the mitochondrion. The catalysed reaction is citrate = D-threo-isocitrate. The protein operates within carbohydrate metabolism; tricarboxylic acid cycle; isocitrate from oxaloacetate: step 2/2. Functionally, catalyzes the isomerization of citrate to isocitrate via cis-aconitate. This is Aconitate hydratase, mitochondrial (ACO2) from Sus scrofa (Pig).